A 417-amino-acid polypeptide reads, in one-letter code: Transmembrane protease serine 11D (417 aa).

The Cytoplasmic portion of the chain corresponds to M1–F17. Residues M18–I38 form a helical; Signal-anchor for type II membrane protein membrane-spanning segment. Over H39 to I417 the chain is Extracellular. The 117-residue stretch at R46–Q162 folds into the SEA domain. 4 disulfides stabilise this stretch: C172–C291, C211–C227, C336–C352, and C363–C392. The region spanning I186–G416 is the Peptidase S1 domain. Active-site charge relay system residues include H226 and D271. S367 (charge relay system) is an active-site residue.

The protein belongs to the peptidase S1 family. Monomer. As to expression, isoform 1 and isoform 2 are expressed in the esophagus, tongue and trachea. Isoform 2 is also highly expressed in the adrenal cortex and heart.

It is found in the cell membrane. Its subcellular location is the secreted. In terms of biological role, may play some biological role in the host defense system on the mucous membrane independently of or in cooperation with other substances in airway mucous or bronchial secretions. Plays a role in the proteolytic processing of ACE2. Preferentially cleaves the C-terminal side of arginine residues at the P1 position of certain peptides. Isoform 2 may play a key role in regulating adrenal proliferation by specifically cleaving N-POMC. The protein is Transmembrane protease serine 11D (Tmprss11d) of Rattus norvegicus (Rat).